Reading from the N-terminus, the 333-residue chain is D-fructose 1,6-bisphosphatase class 2/sedoheptulose 1,7-bisphosphatase (333 aa).

Mn(2+) is bound by residues aspartate 33, glutamate 57, aspartate 85, and glutamate 88. Substrate-binding positions include 88-90, tyrosine 119, 164-166, and 186-188; these read EGT, RTR, and DGD. Glutamate 213 is a Mn(2+) binding site.

This sequence belongs to the FBPase class 2 family. Homotetramer. It depends on Mn(2+) as a cofactor.

It carries out the reaction beta-D-fructose 1,6-bisphosphate + H2O = beta-D-fructose 6-phosphate + phosphate. The catalysed reaction is D-sedoheptulose 1,7-bisphosphate + H2O = D-sedoheptulose 7-phosphate + phosphate. The protein operates within carbohydrate biosynthesis; Calvin cycle. Its function is as follows. Catalyzes the hydrolysis of fructose 1,6-bisphosphate (Fru 1,6-P2) and sedoheptulose 1,7-bisphosphate (Sed 1,7-P2) to fructose 6-phosphate and sedoheptulose 7-phosphate, respectively. This Prochlorococcus marinus (strain AS9601) protein is D-fructose 1,6-bisphosphatase class 2/sedoheptulose 1,7-bisphosphatase.